An 877-amino-acid chain; its full sequence is Alanine--tRNA ligase (877 aa).

The Zn(2+) site is built by His563, His567, Cys665, and His669.

Belongs to the class-II aminoacyl-tRNA synthetase family. Zn(2+) serves as cofactor.

It localises to the cytoplasm. It carries out the reaction tRNA(Ala) + L-alanine + ATP = L-alanyl-tRNA(Ala) + AMP + diphosphate. Its function is as follows. Catalyzes the attachment of alanine to tRNA(Ala) in a two-step reaction: alanine is first activated by ATP to form Ala-AMP and then transferred to the acceptor end of tRNA(Ala). Also edits incorrectly charged Ser-tRNA(Ala) and Gly-tRNA(Ala) via its editing domain. This chain is Alanine--tRNA ligase, found in Thermoanaerobacter pseudethanolicus (strain ATCC 33223 / 39E) (Clostridium thermohydrosulfuricum).